A 270-amino-acid polypeptide reads, in one-letter code: Imidazoleglycerol-phosphate dehydratase 1, chloroplastic (270 aa).

A chloroplast-targeting transit peptide spans 1–62 (MELSSASAIL…QSQLRQSISC (62 aa)). Residue Ser-63 is modified to N-acetylserine. Substrate-binding positions include Glu-84, 110-118 (HMLDQLASH), 136-140 (HHTNE), Arg-162, and Arg-184. 4 residues coordinate Mn(2+): His-110, His-136, His-137, and Glu-140. Residues His-208, His-232, His-233, and Glu-236 each contribute to the Mn(2+) site. Substrate contacts are provided by residues 232 to 240 (HHIIEATFK) and 262 to 264 (SSK). The segment at 250–270 (TETDPRRGGTIPSSKGVLSRS) is disordered.

Belongs to the imidazoleglycerol-phosphate dehydratase family. It depends on Mn(2+) as a cofactor.

Its subcellular location is the plastid. It localises to the chloroplast. The enzyme catalyses D-erythro-1-(imidazol-4-yl)glycerol 3-phosphate = 3-(imidazol-4-yl)-2-oxopropyl phosphate + H2O. The protein operates within amino-acid biosynthesis; L-histidine biosynthesis; L-histidine from 5-phospho-alpha-D-ribose 1-diphosphate: step 6/9. This chain is Imidazoleglycerol-phosphate dehydratase 1, chloroplastic, found in Arabidopsis thaliana (Mouse-ear cress).